The sequence spans 426 residues: Histidine--tRNA ligase (426 aa).

It belongs to the class-II aminoacyl-tRNA synthetase family. Homodimer.

It localises to the cytoplasm. It carries out the reaction tRNA(His) + L-histidine + ATP = L-histidyl-tRNA(His) + AMP + diphosphate + H(+). The chain is Histidine--tRNA ligase from Pseudoalteromonas atlantica (strain T6c / ATCC BAA-1087).